The following is a 262-amino-acid chain: Chondroitin proteoglycan 3 (262 aa).

A signal peptide spans 1–17 (MRSSFIFALLLIGAALA). Positions 37 to 68 (FSGEASGEASGEASGEFSGEGSGEGSGELSPE) are disordered. Low complexity predominate over residues 39 to 53 (GEASGEASGEASGEF). N-linked (GlcNAc...) asparagine glycosylation is found at asparagine 140, asparagine 148, and asparagine 224.

The protein is Chondroitin proteoglycan 3 (cpg-3) of Caenorhabditis briggsae.